A 369-amino-acid chain; its full sequence is MQVDPTKGIGLANTSLQFSNGRLHALCEYDLPYVVRLSPEDGDISTVGRIENNVSTKSTTAHPKTDPVTGETFSFSYGPIQPYVTYSRYDCDGKKSGPDVPIFSFKEPSFVHDFAITEHYAVFPDIQIVMKPAEIVRGRRMIGPDLEKVPRLGLLPRYATSDSEMRWFDVPGFNMVHVVNAWEEEGGEVVVIVAPNVSPIENAIDRFDLLHVSVEMARIELKSGSVSRTLLSAENLDFGVIHRGYSGRKSRYAYLGVGDPMPKIRGVVKVDFELAGRGECVVARREFGVGCFGGEPFFVPASSKKSGGEEDDGYVVSYLHDEGKGESSFVVMDARSPELEILAEVVLPRRVPYGFHGLFVTEAELLSQQ.

4 residues coordinate Fe cation: histidine 62, histidine 112, histidine 177, and histidine 356.

It belongs to the carotenoid oxygenase family. Requires Fe(2+) as cofactor. As to expression, in the style branches.

The protein resides in the plastid. Its subcellular location is the chromoplast. It catalyses the reaction all-trans-zeaxanthin + 2 O2 = crocetin dialdehyde + 2 3beta-hydroxy-beta-cyclocitral. Functionally, cleaves zeaxanthin symmetrically at the 7-8 and 7'-8' double bonds to produce crocetin dialdehyde and hydroxy-beta-cyclocitral, two water-soluble precursors sequestred in vacuoles and involved in the synthesis of saffron pigment and aroma. The protein is Zeaxanthin 7,8(7',8')-cleavage dioxygenase, chromoplastic (ZCD) of Crocus sativus (Saffron).